The sequence spans 336 residues: Aspartate--ammonia ligase (336 aa).

The protein belongs to the class-II aminoacyl-tRNA synthetase family. AsnA subfamily.

It is found in the cytoplasm. It catalyses the reaction L-aspartate + NH4(+) + ATP = L-asparagine + AMP + diphosphate + H(+). It participates in amino-acid biosynthesis; L-asparagine biosynthesis; L-asparagine from L-aspartate (ammonia route): step 1/1. This is Aspartate--ammonia ligase from Clostridium perfringens (strain 13 / Type A).